Reading from the N-terminus, the 428-residue chain is Histone deacetylase 3 (428 aa).

The interval 3–316 (KTVAYFYDPD…WTYETSLLVE (314 aa)) is histone deacetylase. Residues His17, Gly21, and Lys25 each contribute to the 1D-myo-inositol 1,4,5,6-tetrakisphosphate site. Residue His135 is part of the active site. Positions 170, 172, and 259 each coordinate Zn(2+). Arg265 is a binding site for 1D-myo-inositol 1,4,5,6-tetrakisphosphate. Basic and acidic residues-rich tracts occupy residues 388–405 (DRTDEADAEERGPEENYS) and 415–428 (DGDHDNDKESDVEI). Positions 388–428 (DRTDEADAEERGPEENYSRPEAPNEFYDGDHDNDKESDVEI) are disordered. Ser424 carries the post-translational modification Phosphoserine.

Belongs to the histone deacetylase family. HD type 1 subfamily. As to quaternary structure, interacts with HDAC7 and HDAC9. Interacts with DAXX, KDM4A, HDAC10 and DACH1. Found in a complex with NCOR1 and NCOR2. Component of the N-Cor repressor complex, at least composed of NCOR1, NCOR2, HDAC3, TBL1X, TBL1R, CORO2A and GPS2. Interacts with BCOR, MJD2A/JHDM3A, NRIP1, PRDM6 and SRY. Interacts with BTBD14B. Interacts with GLIS2. Interacts (via the DNA-binding domain) with NR2C1; the interaction recruits phosphorylated NR2C1 to PML bodies for sumoylation. Component of the Notch corepressor complex. Interacts with CBFA2T3 and NKAP. Interacts with APEX1; the interaction is not dependent on the acetylated status of APEX1. Interacts with ZMYND15. Interacts with SMRT/NCOR2 and BCL6 on DNA enhancer elements. Interacts with INSM1. Interacts with XBP1 isoform 1; the interaction occurs in endothelial cell (EC) under disturbed flow. Interacts (via C-terminus) with CCAR2 (via N-terminus). Interacts with and deacetylates MEF2D. Interacts with BEND3. Interacts with NKAPL. Interacts with DHX36; this interaction occurs in a RNA-dependent manner. Interacts weakly with CRY1; this interaction is enhanced in the presence of FBXL3. Interacts with FBXL3 and BMAL1. Interacts with NCOR1. Interacts with RARA. Interacts with SETD5. In terms of processing, sumoylated in vitro. Deubiquitinated on 'Lys-63'-linked ubiquitin chains by USP38; leading to a decreased level of histone acetylation.

It localises to the nucleus. The protein resides in the chromosome. It is found in the cytoplasm. Its subcellular location is the cytosol. The catalysed reaction is N(6)-acetyl-L-lysyl-[histone] + H2O = L-lysyl-[histone] + acetate. It carries out the reaction N(6)-acetyl-L-lysyl-[protein] + H2O = L-lysyl-[protein] + acetate. The enzyme catalyses N(6)-(2E)-butenoyl-L-lysyl-[protein] + H2O = (2E)-2-butenoate + L-lysyl-[protein]. It catalyses the reaction N(6)-(2-hydroxyisobutanoyl)-L-lysyl-[protein] + H2O = 2-hydroxy-2-methylpropanoate + L-lysyl-[protein]. The catalysed reaction is N(6)-[(S)-lactoyl]-L-lysyl-[protein] + H2O = (S)-lactate + L-lysyl-[protein]. With respect to regulation, inositol tetraphosphate (1D-myo-inositol 1,4,5,6-tetrakisphosphate) promotes the histone deacetylase activity by acting as an intermolecular glue between HDAC3 and NCOR2, thereby promoting its association with the N-Cor complex, a prerequisite for the histone deacetylase activity. Its function is as follows. Histone deacetylase that catalyzes the deacetylation of lysine residues on the N-terminal part of the core histones (H2A, H2B, H3 and H4), and some other non-histone substrates. Histone deacetylation gives a tag for epigenetic repression and plays an important role in transcriptional regulation, cell cycle progression and developmental events. Histone deacetylases act via the formation of large multiprotein complexes, such as N-Cor repressor complex, which activate the histone deacetylase activity. Participates in the BCL6 transcriptional repressor activity by deacetylating the H3 'Lys-27' (H3K27) on enhancer elements, antagonizing EP300 acetyltransferase activity and repressing proximal gene expression. Acts as a molecular chaperone for shuttling phosphorylated NR2C1 to PML bodies for sumoylation. Contributes, together with XBP1 isoform 1, to the activation of NFE2L2-mediated HMOX1 transcription factor gene expression in a PI(3)K/mTORC2/Akt-dependent signaling pathway leading to endothelial cell (EC) survival under disturbed flow/oxidative stress. Regulates both the transcriptional activation and repression phases of the circadian clock in a deacetylase activity-independent manner. During the activation phase, promotes the accumulation of ubiquitinated BMAL1 at the E-boxes and during the repression phase, blocks FBXL3-mediated CRY1/2 ubiquitination and promotes the interaction of CRY1 and BMAL1. The NCOR1-HDAC3 complex regulates the circadian expression of the core clock gene BMAL1 and the genes involved in lipid metabolism in the liver. Also functions as deacetylase for non-histone targets, such as KAT5, MEF2D, MAPK14, RARA and STAT3. Serves as a corepressor of RARA, mediating its deacetylation and repression, leading to inhibition of RARE DNA element binding. In addition to protein deacetylase activity, also acts as a protein-lysine deacylase by recognizing other acyl groups: catalyzes removal of (2E)-butenoyl (crotonyl), lactoyl (lactyl) and 2-hydroxyisobutanoyl (2-hydroxyisobutyryl) acyl groups from lysine residues, leading to protein decrotonylation, delactylation and de-2-hydroxyisobutyrylation, respectively. Catalyzes decrotonylation of MAPRE1/EB1. Mediates delactylation NBN/NBS1, thereby inhibiting DNA double-strand breaks (DSBs) via homologous recombination (HR). This Mus musculus (Mouse) protein is Histone deacetylase 3.